The chain runs to 178 residues: Probable DNA-directed RNA polymerase subunit delta (178 aa).

One can recognise an HTH HARE-type domain in the interval Lys-14–Trp-81. The segment at Leu-114–Asp-178 is disordered. A compositionally biased stretch (acidic residues) spans Asp-116–Asp-178.

This sequence belongs to the RpoE family. As to quaternary structure, RNAP is composed of a core of 2 alpha, a beta and a beta' subunits. The core is associated with a delta subunit and one of several sigma factors.

Functionally, participates in both the initiation and recycling phases of transcription. In the presence of the delta subunit, RNAP displays an increased specificity of transcription, a decreased affinity for nucleic acids, and an increased efficiency of RNA synthesis because of enhanced recycling. This Staphylococcus epidermidis (strain ATCC 35984 / DSM 28319 / BCRC 17069 / CCUG 31568 / BM 3577 / RP62A) protein is Probable DNA-directed RNA polymerase subunit delta.